The sequence spans 353 residues: UPF0283 membrane protein YcjF (353 aa).

Basic and acidic residues predominate over residues 1-19 (MSEPLKPRIDFAEPLKEEP). Residues 1–35 (MSEPLKPRIDFAEPLKEEPTSAFKAQQTFSEAESR) are disordered. Helical transmembrane passes span 70–90 (MVMGGLALFGASVVGQGVQWT), 100–120 (VALGGCAAGALIIGAGVGSVV), and 213–233 (ESTLMIAVSPLALVDMAFIAW).

It belongs to the UPF0283 family.

It localises to the cell inner membrane. The chain is UPF0283 membrane protein YcjF from Salmonella dublin (strain CT_02021853).